The sequence spans 66 residues: Cysteine proteinase inhibitor (66 aa).

Residues Gln-18–Gly-22 carry the Secondary area of contact motif.

The protein belongs to the cystatin family. Phytocystatin subfamily. In tubers of untreated plants. After ABA treatment or mechanical wounding is mostly accumulated in leaves, to a lesser extent in stems, but not in roots.

In Solanum tuberosum (Potato), this protein is Cysteine proteinase inhibitor (CYS-PIN).